Consider the following 324-residue polypeptide: Fructose-1,6-bisphosphatase class 1 (324 aa).

The Mg(2+) site is built by Glu-88, Asp-107, Leu-109, and Asp-110. Substrate contacts are provided by residues 110-113, Asn-199, and Lys-265; that span reads DGSS. Position 271 (Glu-271) interacts with Mg(2+).

Belongs to the FBPase class 1 family. As to quaternary structure, homotetramer. Mg(2+) serves as cofactor.

It is found in the cytoplasm. It carries out the reaction beta-D-fructose 1,6-bisphosphate + H2O = beta-D-fructose 6-phosphate + phosphate. It participates in carbohydrate biosynthesis; gluconeogenesis. This is Fructose-1,6-bisphosphatase class 1 from Neisseria meningitidis serogroup B (strain ATCC BAA-335 / MC58).